Reading from the N-terminus, the 155-residue chain is Endoribonuclease YbeY (155 aa).

Zn(2+) contacts are provided by H114, H118, and H124.

The protein belongs to the endoribonuclease YbeY family. Zn(2+) is required as a cofactor.

The protein resides in the cytoplasm. Functionally, single strand-specific metallo-endoribonuclease involved in late-stage 70S ribosome quality control and in maturation of the 3' terminus of the 16S rRNA. This is Endoribonuclease YbeY from Escherichia coli O6:K15:H31 (strain 536 / UPEC).